The sequence spans 54 residues: Large ribosomal subunit protein bL33 (54 aa).

Belongs to the bacterial ribosomal protein bL33 family.

This Corynebacterium diphtheriae (strain ATCC 700971 / NCTC 13129 / Biotype gravis) protein is Large ribosomal subunit protein bL33.